A 305-amino-acid polypeptide reads, in one-letter code: Ornithine carbamoyltransferase (305 aa).

Residues 52 to 55, Q79, R103, and 130 to 133 contribute to the carbamoyl phosphate site; these read STRT and HPLQ. L-ornithine-binding positions include N162, D224, and 228 to 229; that span reads SM. Carbamoyl phosphate contacts are provided by residues 264 to 265 and R292; that span reads CL.

This sequence belongs to the aspartate/ornithine carbamoyltransferase superfamily. OTCase family.

Its subcellular location is the cytoplasm. The catalysed reaction is carbamoyl phosphate + L-ornithine = L-citrulline + phosphate + H(+). Its pathway is amino-acid biosynthesis; L-arginine biosynthesis; L-arginine from L-ornithine and carbamoyl phosphate: step 1/3. In terms of biological role, reversibly catalyzes the transfer of the carbamoyl group from carbamoyl phosphate (CP) to the N(epsilon) atom of ornithine (ORN) to produce L-citrulline. This Pyrobaculum islandicum (strain DSM 4184 / JCM 9189 / GEO3) protein is Ornithine carbamoyltransferase.